The primary structure comprises 147 residues: Small ribosomal subunit protein eS19 (147 aa).

It belongs to the eukaryotic ribosomal protein eS19 family. Component of the small ribosomal subunit.

The protein localises to the cytoplasm. It localises to the nucleus. In terms of biological role, component of the small ribosomal subunit. The ribosome is a large ribonucleoprotein complex responsible for the synthesis of proteins in the cell. Required for pre-rRNA processing and maturation of 40S ribosomal subunits. The chain is Small ribosomal subunit protein eS19 (rps19) from Gillichthys mirabilis (Long-jawed mudsucker).